The sequence spans 339 residues: MamK-like protein (339 aa).

ATP-binding positions include 18–19 (YS), Asp-74, 162–164 (AWT), and 216–220 (KEQFA).

Belongs to the FtsA/MreB family. MamK subfamily. As to quaternary structure, forms cytoplasmic filament polymers. Forms filaments with MamK.

It is found in the cytoplasm. The protein localises to the cytoskeleton. It catalyses the reaction ATP + H2O = ADP + phosphate + H(+). Its function is as follows. Protein with ATPase activity which forms pole-to-pole filaments in vivo, probably with MamK. Efficient filament formation requires MamK. Probably promotes turnover of MamK filaments, by providing a monomer pool. In vivo, in the absence of its paralog MamK, forms thin filaments from pole to pole. In vitro forms straight filaments and bundles in the absence of ATP. Filament formation is triggered by KCl and MgCl(2); polymerizes more slowly and makes thinner filaments than MamK. Expression in E.coli yields a filament in the cell's longitudinal axis; the protein nucleates at one pole or the cell septum. The sequence is that of MamK-like protein from Paramagnetospirillum magneticum (strain ATCC 700264 / AMB-1) (Magnetospirillum magneticum).